The following is a 184-amino-acid chain: Lipoprotein signal peptidase (184 aa).

The next 3 membrane-spanning stretches (helical) occupy residues 23-43, 88-108, and 110-130; these read FLYYKLALILFVGFVILFQVF, PGLVYFLQGFLSFIALFFLVF, and TSYNYIFWITTLAFGSLGNFF. Catalysis depends on residues D142 and D157. Residues 156 to 176 form a helical membrane-spanning segment; it reads ADCCITFSFIGLFLSFLIQFF.

This sequence belongs to the peptidase A8 family.

It is found in the cell membrane. It catalyses the reaction Release of signal peptides from bacterial membrane prolipoproteins. Hydrolyzes -Xaa-Yaa-Zaa-|-(S,diacylglyceryl)Cys-, in which Xaa is hydrophobic (preferably Leu), and Yaa (Ala or Ser) and Zaa (Gly or Ala) have small, neutral side chains.. Its pathway is protein modification; lipoprotein biosynthesis (signal peptide cleavage). This protein specifically catalyzes the removal of signal peptides from prolipoproteins. The protein is Lipoprotein signal peptidase of Mycoplasma pneumoniae (strain ATCC 29342 / M129 / Subtype 1) (Mycoplasmoides pneumoniae).